Consider the following 113-residue polypeptide: Hydrogenase maturation factor HypA 2 (113 aa).

Residue histidine 2 coordinates Ni(2+). Zn(2+) contacts are provided by cysteine 73, cysteine 76, cysteine 89, and cysteine 92.

This sequence belongs to the HypA/HybF family.

Its function is as follows. Involved in the maturation of [NiFe] hydrogenases. Required for nickel insertion into the metal center of the hydrogenase. The chain is Hydrogenase maturation factor HypA 2 from Bradyrhizobium diazoefficiens (strain JCM 10833 / BCRC 13528 / IAM 13628 / NBRC 14792 / USDA 110).